Here is a 148-residue protein sequence, read N- to C-terminus: Protein Smg homolog (148 aa).

This sequence belongs to the Smg family.

The sequence is that of Protein Smg homolog from Thiobacillus denitrificans (strain ATCC 25259 / T1).